A 750-amino-acid polypeptide reads, in one-letter code: Amyloid-beta A4 precursor protein-binding family A member 2 (750 aa).

2 disordered regions span residues 1–94 and 143–346; these read MAHR…PEEE and DSVG…IPET. Residue serine 11 is modified to Phosphoserine. Polar residues predominate over residues 70–80; the sequence is GDSSSDYVNNT. Residues 81–94 show a composition bias toward acidic residues; the sequence is SEEEDYDEGLPEEE. The interval 185–271 is STXBP1-binding; that stretch reads HYCSSKESYQ…STEACPPSDT (87 aa). Serine 209 carries the phosphoserine modification. Residues 219–228 are compositionally biased toward acidic residues; sequence DLEEQEEDID. Polar residues-rich tracts occupy residues 238–248 and 332–344; these read LSMTSITSASE and SDLNGPTDNNNIP. The region spanning 367-556 is the PID domain; sequence LIDGIIFAAN…IINTQEMYND (190 aa). 2 consecutive PDZ domains span residues 569–654 and 660–736; these read ELQL…NIVS and TVLI…MPAA.

In terms of assembly, part of a multimeric complex containing STXBP1 and syntaxin-1. Binds to the cytoplasmic domain of amyloid-beta protein, and to the nuclear factor NF-kappa-B/p65 via its PDZ domain. Interacts with the N-terminal domain of NECAB3. As to expression, specifically expressed in neurons, predominantly of the cerebellum, hippocampus, and spinal cord. Lesser extent in neurons of the cerebral cortex and anterior thalmic nuclei.

Functionally, putative function in synaptic vesicle exocytosis by binding to STXBP1, an essential component of the synaptic vesicle exocytotic machinery. May modulate processing of the amyloid-beta precursor protein (APP) and hence formation of APP-beta. This Mus musculus (Mouse) protein is Amyloid-beta A4 precursor protein-binding family A member 2 (Apba2).